Here is a 531-residue protein sequence, read N- to C-terminus: DnaJ homolog subfamily C member 21 (531 aa).

The J domain maps to 3-69 (CHYEALGVRR…QERAWYDNHR (67 aa)). Disordered regions lie at residues 279–311 (FGDG…AELY), 327–474 (KAMK…VPAE), and 502–531 (KATG…RKNR). A compositionally biased stretch (acidic residues) spans 281-311 (DGSDENEMEEHELKDEEDGKDSDEAEDAELY). 2 positions are modified to phosphoserine: serine 283 and serine 302. The segment at 314-338 (LYCPACDKSFKTEKAMKNHEKSKKH) adopts a C2H2-type 1 zinc-finger fold. Residues 364 to 375 (NPLDDNSEEEME) are compositionally biased toward acidic residues. Serine 370 is subject to Phosphoserine. Basic residues predominate over residues 381-392 (KLSKKQKKKKQK). The span at 393–403 (PAQNYDDNFNV) shows a compositional bias: polar residues. The span at 442–453 (KPCDDPKSEAKS) shows a compositional bias: basic and acidic residues. A compositionally biased stretch (basic residues) spans 455-464 (PKPKGKKTKD). The C2H2-type 2 zinc finger occupies 482 to 506 (ISCTTCHSEFPSRNKLFDHLKATGH). At serine 511 the chain carries Phosphoserine. Over residues 511–522 (SSSSLNSATSSQ) the composition is skewed to low complexity.

Interacts with HSPA8, PA2G4 and ZNF622. In terms of tissue distribution, expressed in brain, placenta, kidney and pancreas.

The protein localises to the cytoplasm. The protein resides in the nucleus. It is found in the nucleolus. Functionally, may act as a co-chaperone for HSP70. May play a role in ribosomal RNA (rRNA) biogenesis, possibly in the maturation of the 60S subunit. Binds the precursor 45S rRNA. The chain is DnaJ homolog subfamily C member 21 (DNAJC21) from Homo sapiens (Human).